The following is a 270-amino-acid chain: Phosphatidylglycerol--prolipoprotein diacylglyceryl transferase (270 aa).

The next 4 membrane-spanning stretches (helical) occupy residues 19-39 (FPVY…LWLA), 56-76 (LVLI…VIFE), 92-112 (QGGL…ILFA), and 116-136 (GVSF…GQAI). Arg138 contacts a 1,2-diacyl-sn-glycero-3-phospho-(1'-sn-glycerol). The next 3 membrane-spanning stretches (helical) occupy residues 178–198 (HPTF…LLAL), 206–226 (GELF…VEGL), and 236–256 (LRIA…FIIV).

This sequence belongs to the Lgt family.

It localises to the cell membrane. The catalysed reaction is L-cysteinyl-[prolipoprotein] + a 1,2-diacyl-sn-glycero-3-phospho-(1'-sn-glycerol) = an S-1,2-diacyl-sn-glyceryl-L-cysteinyl-[prolipoprotein] + sn-glycerol 1-phosphate + H(+). The protein operates within protein modification; lipoprotein biosynthesis (diacylglyceryl transfer). Functionally, catalyzes the transfer of the diacylglyceryl group from phosphatidylglycerol to the sulfhydryl group of the N-terminal cysteine of a prolipoprotein, the first step in the formation of mature lipoproteins. The protein is Phosphatidylglycerol--prolipoprotein diacylglyceryl transferase of Bacillus thuringiensis subsp. konkukian (strain 97-27).